Consider the following 89-residue polypeptide: UPF0335 protein Nwi_0989 (89 aa).

Belongs to the UPF0335 family.

The sequence is that of UPF0335 protein Nwi_0989 from Nitrobacter winogradskyi (strain ATCC 25391 / DSM 10237 / CIP 104748 / NCIMB 11846 / Nb-255).